A 934-amino-acid polypeptide reads, in one-letter code: Bifunctional uridylyltransferase/uridylyl-removing enzyme (934 aa).

Residues 1–379 (MSAHDLKLEE…TFSRRKRKLS (379 aa)) are uridylyltransferase. The tract at residues 380–736 (DDGAFISENH…AKPHAFEAVT (357 aa)) is uridylyl-removing. The 118-residue stretch at 496–613 (VDEHLLRCIA…IDFADTVQTM (118 aa)) folds into the HD domain. ACT domains follow at residues 737-818 (EITV…DMLA) and 848-931 (VIEV…RSPQ).

Belongs to the GlnD family. Requires Mg(2+) as cofactor.

It carries out the reaction [protein-PII]-L-tyrosine + UTP = [protein-PII]-uridylyl-L-tyrosine + diphosphate. The enzyme catalyses [protein-PII]-uridylyl-L-tyrosine + H2O = [protein-PII]-L-tyrosine + UMP + H(+). Its activity is regulated as follows. Uridylyltransferase (UTase) activity is inhibited by glutamine, while glutamine activates uridylyl-removing (UR) activity. Its function is as follows. Modifies, by uridylylation and deuridylylation, the PII regulatory proteins (GlnB and homologs), in response to the nitrogen status of the cell that GlnD senses through the glutamine level. Under low glutamine levels, catalyzes the conversion of the PII proteins and UTP to PII-UMP and PPi, while under higher glutamine levels, GlnD hydrolyzes PII-UMP to PII and UMP (deuridylylation). Thus, controls uridylylation state and activity of the PII proteins, and plays an important role in the regulation of nitrogen assimilation and metabolism. This chain is Bifunctional uridylyltransferase/uridylyl-removing enzyme, found in Brucella suis (strain ATCC 23445 / NCTC 10510).